Consider the following 331-residue polypeptide: Protein-methionine-sulfoxide reductase catalytic subunit MsrP (331 aa).

Positions 1-54 form a signal peptide, tat-type signal; it reads MLIKTDRWLRGDDIPASEITPQHLFDQRRRLLAAAALGAAGAALSPWAARRAFA. Mo-molybdopterin-binding positions include asparagine 86, 89-90, cysteine 144, serine 179, asparagine 227, arginine 232, and 243-245; these read YE and SAK.

Belongs to the MsrP family. In terms of assembly, heterodimer of a catalytic subunit (MsrP) and a heme-binding subunit (MsrQ). It depends on Mo-molybdopterin as a cofactor. In terms of processing, predicted to be exported by the Tat system. The position of the signal peptide cleavage has not been experimentally proven.

Its subcellular location is the periplasm. The catalysed reaction is L-methionyl-[protein] + a quinone + H2O = L-methionyl-(S)-S-oxide-[protein] + a quinol. The enzyme catalyses L-methionyl-[protein] + a quinone + H2O = L-methionyl-(R)-S-oxide-[protein] + a quinol. Part of the MsrPQ system that repairs oxidized periplasmic proteins containing methionine sulfoxide residues (Met-O), using respiratory chain electrons. Thus protects these proteins from oxidative-stress damage caused by reactive species of oxygen and chlorine generated by the host defense mechanisms. MsrPQ is essential for the maintenance of envelope integrity under bleach stress, rescuing a wide series of structurally unrelated periplasmic proteins from methionine oxidation. The catalytic subunit MsrP is non-stereospecific, being able to reduce both (R-) and (S-) diastereoisomers of methionine sulfoxide. This chain is Protein-methionine-sulfoxide reductase catalytic subunit MsrP, found in Ralstonia nicotianae (strain ATCC BAA-1114 / GMI1000) (Ralstonia solanacearum).